The primary structure comprises 457 residues: GTPase Der (457 aa).

2 consecutive EngA-type G domains span residues Pro-4 to Asn-169 and Ile-177 to Arg-352. Residues Gly-10 to Ser-17, Asp-57 to Leu-61, Asn-120 to Glu-123, Gly-183 to Ser-190, Asp-230 to Ile-234, and Asn-295 to Asp-298 contribute to the GTP site. The 86-residue stretch at Arg-353–Gln-438 folds into the KH-like domain.

The protein belongs to the TRAFAC class TrmE-Era-EngA-EngB-Septin-like GTPase superfamily. EngA (Der) GTPase family. In terms of assembly, associates with the 50S ribosomal subunit.

Its function is as follows. GTPase that plays an essential role in the late steps of ribosome biogenesis. In Prochlorococcus marinus (strain MIT 9215), this protein is GTPase Der.